Consider the following 93-residue polypeptide: Acylphosphatase (93 aa).

Residues Thr4 to Ala91 enclose the Acylphosphatase-like domain. Catalysis depends on residues Arg19 and Asn37.

This sequence belongs to the acylphosphatase family.

The catalysed reaction is an acyl phosphate + H2O = a carboxylate + phosphate + H(+). This is Acylphosphatase (acyP) from Azorhizobium caulinodans (strain ATCC 43989 / DSM 5975 / JCM 20966 / LMG 6465 / NBRC 14845 / NCIMB 13405 / ORS 571).